The chain runs to 218 residues: Cytochrome b6 (218 aa).

A helical membrane pass occupies residues Ile35–Phe55. Heme c is bound at residue Cys38. Positions 89 and 103 each coordinate heme b. Transmembrane regions (helical) follow at residues Ala93 to Phe113, Leu119 to Tyr139, and Leu189 to Ile209. Residues His190 and His205 each coordinate heme b.

Belongs to the cytochrome b family. PetB subfamily. The 4 large subunits of the cytochrome b6-f complex are cytochrome b6, subunit IV (17 kDa polypeptide, PetD), cytochrome f and the Rieske protein, while the 4 small subunits are PetG, PetL, PetM and PetN. The complex functions as a dimer. Heme b serves as cofactor. Requires heme c as cofactor.

Its subcellular location is the cellular thylakoid membrane. Component of the cytochrome b6-f complex, which mediates electron transfer between photosystem II (PSII) and photosystem I (PSI), cyclic electron flow around PSI, and state transitions. The polypeptide is Cytochrome b6 (Prochlorococcus marinus subsp. pastoris (strain CCMP1986 / NIES-2087 / MED4)).